Here is a 257-residue protein sequence, read N- to C-terminus: Type III pantothenate kinase (257 aa).

6-13 lines the ATP pocket; sequence DSGNTNTV. Position 108-111 (108-111) interacts with substrate; it reads GADR. The Proton acceptor role is filled by Asp-110. Asp-130 lines the K(+) pocket. Thr-133 contacts ATP. Thr-185 lines the substrate pocket.

The protein belongs to the type III pantothenate kinase family. As to quaternary structure, homodimer. The cofactor is NH4(+). K(+) serves as cofactor.

It localises to the cytoplasm. The catalysed reaction is (R)-pantothenate + ATP = (R)-4'-phosphopantothenate + ADP + H(+). It participates in cofactor biosynthesis; coenzyme A biosynthesis; CoA from (R)-pantothenate: step 1/5. Catalyzes the phosphorylation of pantothenate (Pan), the first step in CoA biosynthesis. The protein is Type III pantothenate kinase of Rhodospirillum rubrum (strain ATCC 11170 / ATH 1.1.1 / DSM 467 / LMG 4362 / NCIMB 8255 / S1).